Here is a 354-residue protein sequence, read N- to C-terminus: MNECHYDKRMDFFYNRSNTDTADEWTGTKLVIVLCVGTFFCLFIFFSNSLVIAAVITNRKFHFPFYYLLANLAAADFFAGIAYVFLMFNTGPVSKTLTVNRWFLRQGLLDTSLTASLANLLVIAVERHMSIMRMRVHSNLTKKRVTLLILLVWAIAIFMGAVPTLGWNCLCNISACSSLAPIYSRSYLIFWTVSNLLAFFIMVAVYVRIYMYVKRKTNVLSPHTSGSISRRRAPMKLMKTVMTVLGAFVVCWTPGLVVLLLDGLNCKQCNVQHVKRWFLLLALLNSVMNPIIYSYKDEDMYNTMRKMICCALQDSNTERRPSRNPSTIHSRSETGSQYLEDSISQGPVCNKNGS.

Over 1-31 the chain is Extracellular; it reads MNECHYDKRMDFFYNRSNTDTADEWTGTKLV. N-linked (GlcNAc...) asparagine glycosylation is present at Asn15. The chain crosses the membrane as a helical span at residues 32 to 52; the sequence is IVLCVGTFFCLFIFFSNSLVI. Residues 53–67 are Cytoplasmic-facing; the sequence is AAVITNRKFHFPFYY. A helical transmembrane segment spans residues 68-88; that stretch reads LLANLAAADFFAGIAYVFLMF. Over 89 to 101 the chain is Extracellular; it reads NTGPVSKTLTVNR. A helical membrane pass occupies residues 102-124; sequence WFLRQGLLDTSLTASLANLLVIA. Residues 125–146 are Cytoplasmic-facing; it reads VERHMSIMRMRVHSNLTKKRVT. Residues 147–167 traverse the membrane as a helical segment; the sequence is LLILLVWAIAIFMGAVPTLGW. Over 168–186 the chain is Extracellular; that stretch reads NCLCNISACSSLAPIYSRS. Asn172 is a glycosylation site (N-linked (GlcNAc...) asparagine). A helical transmembrane segment spans residues 187–207; the sequence is YLIFWTVSNLLAFFIMVAVYV. Residues 208–240 are Cytoplasmic-facing; it reads RIYMYVKRKTNVLSPHTSGSISRRRAPMKLMKT. The chain crosses the membrane as a helical span at residues 241-261; that stretch reads VMTVLGAFVVCWTPGLVVLLL. The Extracellular portion of the chain corresponds to 262–276; it reads DGLNCKQCNVQHVKR. Residues 277 to 295 form a helical membrane-spanning segment; the sequence is WFLLLALLNSVMNPIIYSY. At 296–354 the chain is on the cytoplasmic side; that stretch reads KDEDMYNTMRKMICCALQDSNTERRPSRNPSTIHSRSETGSQYLEDSISQGPVCNKNGS. Cys309 is lipidated: S-palmitoyl cysteine. A disordered region spans residues 315-354; sequence SNTERRPSRNPSTIHSRSETGSQYLEDSISQGPVCNKNGS. Residues 323-354 are compositionally biased toward polar residues; the sequence is RNPSTIHSRSETGSQYLEDSISQGPVCNKNGS.

It belongs to the G-protein coupled receptor 1 family. In terms of tissue distribution, most abundantly expressed in testes, kidney, and lung, with moderate levels in small intestine, and low levels in heart, stomach, spleen, and adult and perinatal brain. Little or no expression in embryonic brain, liver, or thymus.

It localises to the cell membrane. Functionally, receptor for lysophosphatidic acid (LPA), a mediator of diverse cellular activities. Seems to be coupled to the G(i)/G(o) and G(q) families of heteromeric G proteins. The polypeptide is Lysophosphatidic acid receptor 3 (Lpar3) (Mus musculus (Mouse)).